The chain runs to 117 residues: Crustacean hyperglycemic hormones 3 (117 aa).

An N-terminal signal peptide occupies residues 1 to 24 (MVTPRMLSALSAVLLLVLTASSSA). Cystine bridges form between C50-C86, C66-C82, and C69-C95. Valine amide is present on V115.

The protein belongs to the arthropod CHH/MIH/GIH/VIH hormone family. Produced by the medulla terminalis X-organ in the eyestalks and transported to the sinus gland where they are stored and released.

It is found in the secreted. Hormone found in the sinus gland of isopods and decapods which controls the blood sugar level. Has a secretagogue action over the amylase released from the midgut gland. May act as a stress hormone and may be involved in the control of molting and reproduction. This Penaeus japonicus (Kuruma prawn) protein is Crustacean hyperglycemic hormones 3.